A 316-amino-acid chain; its full sequence is tRNA dimethylallyltransferase (316 aa).

17 to 24 (GPTASGKT) contacts ATP. 19 to 24 (TASGKT) contacts substrate. Interaction with substrate tRNA regions lie at residues 42-45 (DSVL), 166-170 (QRLSR), 247-252 (RCVGYR), and 280-287 (KRQITWLR).

It belongs to the IPP transferase family. As to quaternary structure, monomer. Requires Mg(2+) as cofactor.

The catalysed reaction is adenosine(37) in tRNA + dimethylallyl diphosphate = N(6)-dimethylallyladenosine(37) in tRNA + diphosphate. Its function is as follows. Catalyzes the transfer of a dimethylallyl group onto the adenine at position 37 in tRNAs that read codons beginning with uridine, leading to the formation of N6-(dimethylallyl)adenosine (i(6)A). This is tRNA dimethylallyltransferase from Shigella flexneri.